The following is a 380-amino-acid chain: Guanine nucleotide-binding protein alpha-1 subunit (380 aa).

Residues 1-25 (MGSSCSRSHSLSEAETTKNAKSADI) are disordered. Gly-2 is lipidated: N-myristoyl glycine. Cys-5 carries the S-palmitoyl cysteine lipid modification. Residues 10–25 (SLSEAETTKNAKSADI) are compositionally biased toward basic and acidic residues. Residues 38-380 (HIHKLLLLGA…ESMRRSREGT (343 aa)) form the G-alpha domain. The G1 motif stretch occupies residues 41-54 (KLLLLGAGESGKST). Residues Glu-49, Ser-50, Gly-51, Lys-52, Ser-53, Thr-54, Asp-163, Leu-188, Tyr-189, Thr-194, Gly-222, Asn-288, Lys-289, Asp-291, and Ala-356 each contribute to the GTP site. A Mg(2+)-binding site is contributed by Ser-53. The tract at residues 186–194 (DVLYARVRT) is G2 motif. A Mg(2+)-binding site is contributed by Thr-194. The G3 motif stretch occupies residues 215–224 (YRLYDVGGQR). The G4 motif stretch occupies residues 284-291 (ILFLNKFD). The segment at 354-359 (TTALDQ) is G5 motif.

This sequence belongs to the G-alpha family. In terms of assembly, g proteins are composed of 3 units; alpha, beta and gamma. The alpha chain contains the guanine nucleotide binding site. Interacts with COLD1. Requires Mg(2+) as cofactor.

The protein resides in the cell membrane. Functionally, guanine nucleotide-binding proteins (G proteins) are involved as modulators or transducers in various transmembrane signaling systems. May function in a signal transduction pathway required for normal growth and development of internodes, leaves, panicles and seeds. Involved in gibberellin signal transduction. Involved in R gene-mediated disease resistance. Functions upstream of the small GTPase RAC1 in the early steps of signaling. Involved in brassinosteroid response. May not be a signaling molecule in BRI1-mediated perception or transduction. The polypeptide is Guanine nucleotide-binding protein alpha-1 subunit (GPA1) (Oryza sativa subsp. indica (Rice)).